A 165-amino-acid chain; its full sequence is NADPH-dependent 7-cyano-7-deazaguanine reductase (165 aa).

Cysteine 56 serves as the catalytic Thioimide intermediate. The Proton donor role is filled by aspartate 63. Substrate is bound by residues 78–80 (VES) and 97–98 (HE).

The protein belongs to the GTP cyclohydrolase I family. QueF type 1 subfamily.

It is found in the cytoplasm. It catalyses the reaction 7-aminomethyl-7-carbaguanine + 2 NADP(+) = 7-cyano-7-deazaguanine + 2 NADPH + 3 H(+). The protein operates within tRNA modification; tRNA-queuosine biosynthesis. Its function is as follows. Catalyzes the NADPH-dependent reduction of 7-cyano-7-deazaguanine (preQ0) to 7-aminomethyl-7-deazaguanine (preQ1). This chain is NADPH-dependent 7-cyano-7-deazaguanine reductase, found in Bacillus cereus (strain ATCC 14579 / DSM 31 / CCUG 7414 / JCM 2152 / NBRC 15305 / NCIMB 9373 / NCTC 2599 / NRRL B-3711).